The primary structure comprises 550 residues: Hydroxylamine reductase (550 aa).

The [2Fe-2S] cluster site is built by Cys3, Cys6, Cys18, and Cys25. The hybrid [4Fe-2O-2S] cluster site is built by His249, Glu273, Cys317, Cys405, Cys433, Cys458, Glu492, and Lys494. Cys405 bears the Cysteine persulfide mark.

Belongs to the HCP family. The cofactor is [2Fe-2S] cluster. It depends on hybrid [4Fe-2O-2S] cluster as a cofactor.

It localises to the cytoplasm. The enzyme catalyses A + NH4(+) + H2O = hydroxylamine + AH2 + H(+). Functionally, catalyzes the reduction of hydroxylamine to form NH(3) and H(2)O. The sequence is that of Hydroxylamine reductase from Salmonella paratyphi A (strain ATCC 9150 / SARB42).